We begin with the raw amino-acid sequence, 202 residues long: Nucleoside triphosphate pyrophosphatase (202 aa).

Asp79 acts as the Proton acceptor in catalysis.

Belongs to the Maf family. A divalent metal cation serves as cofactor.

The protein localises to the cytoplasm. It catalyses the reaction a ribonucleoside 5'-triphosphate + H2O = a ribonucleoside 5'-phosphate + diphosphate + H(+). It carries out the reaction a 2'-deoxyribonucleoside 5'-triphosphate + H2O = a 2'-deoxyribonucleoside 5'-phosphate + diphosphate + H(+). Nucleoside triphosphate pyrophosphatase. May have a dual role in cell division arrest and in preventing the incorporation of modified nucleotides into cellular nucleic acids. The polypeptide is Nucleoside triphosphate pyrophosphatase (Rhodopseudomonas palustris (strain BisB18)).